Consider the following 350-residue polypeptide: Phosphoribosylformylglycinamidine cyclo-ligase (350 aa).

This sequence belongs to the AIR synthase family.

It localises to the cytoplasm. The catalysed reaction is 2-formamido-N(1)-(5-O-phospho-beta-D-ribosyl)acetamidine + ATP = 5-amino-1-(5-phospho-beta-D-ribosyl)imidazole + ADP + phosphate + H(+). It participates in purine metabolism; IMP biosynthesis via de novo pathway; 5-amino-1-(5-phospho-D-ribosyl)imidazole from N(2)-formyl-N(1)-(5-phospho-D-ribosyl)glycinamide: step 2/2. In Syntrophotalea carbinolica (strain DSM 2380 / NBRC 103641 / GraBd1) (Pelobacter carbinolicus), this protein is Phosphoribosylformylglycinamidine cyclo-ligase.